We begin with the raw amino-acid sequence, 151 residues long: MTIWVDADACPNVIKEILYRAAERMQLPLILVANQALRVPPSRFIRTLRVAAGFDVADNEIVRQCEAGDLVITADIPLAAEVLEKGAAALNPRGERYSDATIRERLTMRDFMDTLRASGVQTGGPNTLSPRDRQHFAAELDKWWLENQRKK.

The protein belongs to the UPF0178 family.

This chain is UPF0178 protein YaiI, found in Salmonella paratyphi B (strain ATCC BAA-1250 / SPB7).